Reading from the N-terminus, the 223-residue chain is Endonuclease V (223 aa).

Mg(2+)-binding residues include aspartate 44 and aspartate 109.

The protein belongs to the endonuclease V family. Requires Mg(2+) as cofactor.

The protein localises to the cytoplasm. It carries out the reaction Endonucleolytic cleavage at apurinic or apyrimidinic sites to products with a 5'-phosphate.. Its function is as follows. DNA repair enzyme involved in the repair of deaminated bases. Selectively cleaves double-stranded DNA at the second phosphodiester bond 3' to a deoxyinosine leaving behind the intact lesion on the nicked DNA. In Methanothrix thermoacetophila (strain DSM 6194 / JCM 14653 / NBRC 101360 / PT) (Methanosaeta thermophila), this protein is Endonuclease V.